The following is a 570-amino-acid chain: Sulfite reductase [NADPH] hemoprotein beta-component 1 (570 aa).

[4Fe-4S] cluster contacts are provided by Cys-434, Cys-440, Cys-479, and Cys-483. Cys-483 serves as a coordination point for siroheme.

Belongs to the nitrite and sulfite reductase 4Fe-4S domain family. In terms of assembly, alpha(8)-beta(8). The alpha component is a flavoprotein, the beta component is a hemoprotein. Requires siroheme as cofactor. [4Fe-4S] cluster serves as cofactor.

The enzyme catalyses hydrogen sulfide + 3 NADP(+) + 3 H2O = sulfite + 3 NADPH + 4 H(+). The protein operates within sulfur metabolism; hydrogen sulfide biosynthesis; hydrogen sulfide from sulfite (NADPH route): step 1/1. In terms of biological role, component of the sulfite reductase complex that catalyzes the 6-electron reduction of sulfite to sulfide. This is one of several activities required for the biosynthesis of L-cysteine from sulfate. The chain is Sulfite reductase [NADPH] hemoprotein beta-component 1 from Klebsiella pneumoniae (strain 342).